A 337-amino-acid chain; its full sequence is Glycerol-3-phosphate dehydrogenase [NAD(P)+] (337 aa).

Residues Trp-11, Arg-30, and Lys-102 each contribute to the NADPH site. Sn-glycerol 3-phosphate is bound by residues Lys-102, Gly-138, and Ser-140. Ala-142 is a binding site for NADPH. Residues Lys-193, Asp-246, Ser-256, Arg-257, and Asn-258 each contribute to the sn-glycerol 3-phosphate site. Lys-193 serves as the catalytic Proton acceptor. Arg-257 is a binding site for NADPH. Residues Val-281 and Glu-283 each contribute to the NADPH site.

This sequence belongs to the NAD-dependent glycerol-3-phosphate dehydrogenase family.

It localises to the cytoplasm. It carries out the reaction sn-glycerol 3-phosphate + NAD(+) = dihydroxyacetone phosphate + NADH + H(+). The enzyme catalyses sn-glycerol 3-phosphate + NADP(+) = dihydroxyacetone phosphate + NADPH + H(+). It functions in the pathway membrane lipid metabolism; glycerophospholipid metabolism. Its function is as follows. Catalyzes the reduction of the glycolytic intermediate dihydroxyacetone phosphate (DHAP) to sn-glycerol 3-phosphate (G3P), the key precursor for phospholipid synthesis. The sequence is that of Glycerol-3-phosphate dehydrogenase [NAD(P)+] from Variovorax paradoxus (strain S110).